The following is a 484-amino-acid chain: Cobyric acid synthase (484 aa).

Residues 251–438 enclose the GATase cobBQ-type domain; the sequence is ALKIAVPMLP…LHGLFGSDAY (188 aa). The active-site Nucleophile is Cys333. His430 is an active-site residue.

The protein belongs to the CobB/CobQ family. CobQ subfamily.

It functions in the pathway cofactor biosynthesis; adenosylcobalamin biosynthesis. In terms of biological role, catalyzes amidations at positions B, D, E, and G on adenosylcobyrinic A,C-diamide. NH(2) groups are provided by glutamine, and one molecule of ATP is hydrogenolyzed for each amidation. This is Cobyric acid synthase from Rhizobium etli (strain ATCC 51251 / DSM 11541 / JCM 21823 / NBRC 15573 / CFN 42).